A 697-amino-acid polypeptide reads, in one-letter code: uncharacterized protein (697 aa).

The stretch at 516-545 (ADQSQNDVVALSSRIDRLTQEVVALQNSEK) forms a coiled coil.

This is an uncharacterized protein from Callospermophilus lateralis (Golden-mantled ground squirrel).